A 409-amino-acid polypeptide reads, in one-letter code: Elongation factor Tu, chloroplastic (409 aa).

Positions 10-214 (KPHVNIGTIG…KIDEYIPTPE (205 aa)) constitute a tr-type G domain. Positions 19–26 (GHVDHGKT) are G1. A GTP-binding site is contributed by 19-26 (GHVDHGKT). Position 26 (Thr-26) interacts with Mg(2+). Residues 60 to 64 (GITIN) form a G2 region. Residues 81–84 (DCPG) are G3. GTP contacts are provided by residues 81-85 (DCPGH) and 136-139 (NKAD). Residues 136-139 (NKAD) form a G4 region. The interval 174-176 (SAL) is G5.

It belongs to the TRAFAC class translation factor GTPase superfamily. Classic translation factor GTPase family. EF-Tu/EF-1A subfamily.

The protein localises to the plastid. The protein resides in the chloroplast. It carries out the reaction GTP + H2O = GDP + phosphate + H(+). Functionally, GTP hydrolase that promotes the GTP-dependent binding of aminoacyl-tRNA to the A-site of ribosomes during protein biosynthesis. The sequence is that of Elongation factor Tu, chloroplastic (tufA) from Rhodomonas salina (Cryptomonas salina).